Reading from the N-terminus, the 274-residue chain is 2-dehydro-3-deoxyphosphooctonate aldolase (274 aa).

The protein belongs to the KdsA family.

Its subcellular location is the cytoplasm. The catalysed reaction is D-arabinose 5-phosphate + phosphoenolpyruvate + H2O = 3-deoxy-alpha-D-manno-2-octulosonate-8-phosphate + phosphate. Its pathway is carbohydrate biosynthesis; 3-deoxy-D-manno-octulosonate biosynthesis; 3-deoxy-D-manno-octulosonate from D-ribulose 5-phosphate: step 2/3. The protein operates within bacterial outer membrane biogenesis; lipopolysaccharide biosynthesis. The protein is 2-dehydro-3-deoxyphosphooctonate aldolase of Rickettsia felis (strain ATCC VR-1525 / URRWXCal2) (Rickettsia azadi).